The chain runs to 502 residues: ATP synthase subunit alpha, chloroplastic (502 aa).

Residue 170–177 participates in ATP binding; it reads GDRQTGKS.

This sequence belongs to the ATPase alpha/beta chains family. As to quaternary structure, F-type ATPases have 2 components, CF(1) - the catalytic core - and CF(0) - the membrane proton channel. CF(1) has five subunits: alpha(3), beta(3), gamma(1), delta(1), epsilon(1). CF(0) has four main subunits: a, b, b' and c.

The protein localises to the plastid. The protein resides in the chloroplast thylakoid membrane. The enzyme catalyses ATP + H2O + 4 H(+)(in) = ADP + phosphate + 5 H(+)(out). Functionally, produces ATP from ADP in the presence of a proton gradient across the membrane. The alpha chain is a regulatory subunit. The sequence is that of ATP synthase subunit alpha, chloroplastic from Guillardia theta (Cryptophyte).